Consider the following 220-residue polypeptide: MDIQLSGIGMTSARTRDRLVQRLRDAGIQDERVLDAIRNTPRHLFIEEALAHQAYDDTALPIGHGQTISQPWVVARMTELLIAKGKPRKVLEIGTGCGYQTAVLAPFCDELYSVERIRPLQDLARKRLLQLGLAKVQLKHADGGFGWTAEAPFDAILAACARVDIPEGLLSQLADGGRLVMPVGGDRQQVLTVVDRDGDQFRSQTLDSVRFVPFQRGVLR.

Serine 69 is an active-site residue.

It belongs to the methyltransferase superfamily. L-isoaspartyl/D-aspartyl protein methyltransferase family.

The protein resides in the cytoplasm. The catalysed reaction is [protein]-L-isoaspartate + S-adenosyl-L-methionine = [protein]-L-isoaspartate alpha-methyl ester + S-adenosyl-L-homocysteine. Catalyzes the methyl esterification of L-isoaspartyl residues in peptides and proteins that result from spontaneous decomposition of normal L-aspartyl and L-asparaginyl residues. It plays a role in the repair and/or degradation of damaged proteins. The sequence is that of Protein-L-isoaspartate O-methyltransferase from Alcanivorax borkumensis (strain ATCC 700651 / DSM 11573 / NCIMB 13689 / SK2).